We begin with the raw amino-acid sequence, 491 residues long: MAIQLSDKPLLEWAGDTLAIALFEDAVELTGELASLDEKFAGILKELIAEEEFTGKANSTVFTRVSANIPVRKIILVGLGKTEAFNIDTLRRAAAAVGKVGKKQKSKVIGLSFPLWNNDPTASSQAIAEGVQLALYQDNRFKSDPDDKGSQVETVELLGFAGQEAAINRANQIVSGVILARQLVAAPANSVTPITMAETAQQIAQDYGLQIEILEQEDCEKLGMGAFLGVALASDLPPKFIHLTYKPESTPKRKLAIVGKGLTFDSGGLNIKGAGSGIETMKIDMGGAAATLGAAKAIAQIKPNVEVHFISAVTENMISGKAMHPGDILTASNGKTIEVNNTDAEGRLTLADALVYTDKLGLDAIVDLATLTGANVIALGDDIAGLYTPDDALAGQLEQAASESGEKIWRMPLEEKYFEGLKSGIADMKNTGPRPGGSITAALFLKQFVKDTPWAHLDIAGPVWADKENGYNGPGATGYGVRLLVDWVLSE.

Mn(2+)-binding residues include Lys-260 and Asp-265. Lys-272 is a catalytic residue. Positions 284, 343, and 345 each coordinate Mn(2+). Residue Arg-347 is part of the active site.

This sequence belongs to the peptidase M17 family. The cofactor is Mn(2+).

It is found in the cytoplasm. The catalysed reaction is Release of an N-terminal amino acid, Xaa-|-Yaa-, in which Xaa is preferably Leu, but may be other amino acids including Pro although not Arg or Lys, and Yaa may be Pro. Amino acid amides and methyl esters are also readily hydrolyzed, but rates on arylamides are exceedingly low.. It carries out the reaction Release of an N-terminal amino acid, preferentially leucine, but not glutamic or aspartic acids.. Presumably involved in the processing and regular turnover of intracellular proteins. Catalyzes the removal of unsubstituted N-terminal amino acids from various peptides. This is Probable cytosol aminopeptidase from Trichormus variabilis (strain ATCC 29413 / PCC 7937) (Anabaena variabilis).